We begin with the raw amino-acid sequence, 60 residues long: Protein BNLF2a (60 aa).

The segment covering 14–26 (SSACGLPGSSTET) has biased composition (polar residues). Positions 14-34 (SSACGLPGSSTETRPSHPCPE) are disordered. A helical membrane pass occupies residues 41 to 59 (LRLLLVVLCVLFGLLCLLL).

It belongs to the lymphocryptovirus BNLF2a family. Interacts with host TAP1 and TAP2.

The protein resides in the host endoplasmic reticulum membrane. In terms of biological role, participates in viral evasion from HLA class I-restricted T-cell immunity. Associates with host TAP1 and TAP2 and prevents TAP-mediated peptide transport and subsequent loading. This chain is Protein BNLF2a, found in Homo sapiens (Human).